The sequence spans 112 residues: Urease subunit gamma (112 aa).

The protein belongs to the urease gamma subunit family. Heterotrimer of UreA (gamma), UreB (beta) and UreC (alpha) subunits. Three heterotrimers associate to form the active enzyme.

The protein localises to the cytoplasm. It carries out the reaction urea + 2 H2O + H(+) = hydrogencarbonate + 2 NH4(+). Its pathway is nitrogen metabolism; urea degradation; CO(2) and NH(3) from urea (urease route): step 1/1. The protein is Urease subunit gamma of Gloeothece citriformis (strain PCC 7424) (Cyanothece sp. (strain PCC 7424)).